The primary structure comprises 459 residues: UDP-glycosyltransferase 78D3 (459 aa).

Residues A338–Q340, H355–E363, and F377–H380 contribute to the UDP-alpha-D-glucose site.

Belongs to the UDP-glycosyltransferase family.

In terms of biological role, possesses low quercetin 3-O-glucosyltransferase activity in vitro. The polypeptide is UDP-glycosyltransferase 78D3 (UGT78D3) (Arabidopsis thaliana (Mouse-ear cress)).